A 137-amino-acid chain; its full sequence is MSSMTLFILFVSIIALLFLFINLIFAPHNPYQEKYSIFECGFHSFLGQNRTQFGVKFFIFALVYLLLDLEILLTFPFAVSEYVNNIYGLIILLGFITIITIGFVYELGKSALKIDSRQVITMTRFNYSSTIEYLGKI.

3 consecutive transmembrane segments (helical) span residues 6 to 26 (LFIL…LIFA), 57 to 77 (FFIF…TFPF), and 86 to 106 (IYGL…FVYE).

The protein belongs to the complex I subunit 3 family.

Its subcellular location is the mitochondrion membrane. The enzyme catalyses a ubiquinone + NADH + 5 H(+)(in) = a ubiquinol + NAD(+) + 4 H(+)(out). Functionally, core subunit of the mitochondrial membrane respiratory chain NADH dehydrogenase (Complex I) that is believed to belong to the minimal assembly required for catalysis. Complex I functions in the transfer of electrons from NADH to the respiratory chain. The immediate electron acceptor for the enzyme is believed to be ubiquinone. In Podospora anserina (strain S / ATCC MYA-4624 / DSM 980 / FGSC 10383) (Pleurage anserina), this protein is NADH-ubiquinone oxidoreductase chain 3 (ND3).